Reading from the N-terminus, the 450-residue chain is tRNA-2-methylthio-N(6)-dimethylallyladenosine synthase (450 aa).

The MTTase N-terminal domain maps to 14-132 (GEFFIETWGC…FPNYLNEVKK (119 aa)). [4Fe-4S] cluster is bound by residues C23, C59, C93, C169, C173, and C176. Positions 155–385 (RKNSMKAFVT…VEVVNEISAK (231 aa)) constitute a Radical SAM core domain. A TRAM domain is found at 388 to 450 (KAYEGKIEEV…NSFSLTGEEI (63 aa)).

It belongs to the methylthiotransferase family. MiaB subfamily. In terms of assembly, monomer. [4Fe-4S] cluster serves as cofactor.

It is found in the cytoplasm. The enzyme catalyses N(6)-dimethylallyladenosine(37) in tRNA + (sulfur carrier)-SH + AH2 + 2 S-adenosyl-L-methionine = 2-methylsulfanyl-N(6)-dimethylallyladenosine(37) in tRNA + (sulfur carrier)-H + 5'-deoxyadenosine + L-methionine + A + S-adenosyl-L-homocysteine + 2 H(+). Its function is as follows. Catalyzes the methylthiolation of N6-(dimethylallyl)adenosine (i(6)A), leading to the formation of 2-methylthio-N6-(dimethylallyl)adenosine (ms(2)i(6)A) at position 37 in tRNAs that read codons beginning with uridine. This is tRNA-2-methylthio-N(6)-dimethylallyladenosine synthase from Clostridium botulinum (strain Okra / Type B1).